The sequence spans 220 residues: uncharacterized protein (220 aa).

This is an uncharacterized protein from Bacillus subtilis (strain 168).